The sequence spans 555 residues: Phosphoglucomutase (555 aa).

Residues R22 and S114 each coordinate alpha-D-glucose 1,6-bisphosphate. S114 functions as the Phosphoserine intermediate in the catalytic mechanism. Positions 114, 279, 281, and 283 each coordinate Mg(2+). A Phosphoserine modification is found at S114. Positions 283, 284, 347, 366, 368, and 379 each coordinate alpha-D-glucose 1,6-bisphosphate.

It belongs to the phosphohexose mutase family. Monomer. Mg(2+) serves as cofactor.

Its subcellular location is the cytoplasm. The enzyme catalyses alpha-D-glucose 1-phosphate = alpha-D-glucose 6-phosphate. It carries out the reaction O-phospho-L-seryl-[protein] + alpha-D-glucose 1-phosphate = alpha-D-glucose 1,6-bisphosphate + L-seryl-[protein]. It catalyses the reaction alpha-D-glucose 1,6-bisphosphate + L-seryl-[protein] = O-phospho-L-seryl-[protein] + alpha-D-glucose 6-phosphate. Catalyzes the reversible isomerization of alpha-D-glucose 1-phosphate to alpha-D-glucose 6-phosphate. The mechanism proceeds via the intermediate compound alpha-D-glucose 1,6-bisphosphate. Key enzyme in hexose metabolism. The reverse reaction is an essential step for biosynthesis because glucose 1-phosphate is the starting point for the synthesis of UDP-glucose, which acts as a precursor for the synthesis of oligosaccharides and trehalose. The chain is Phosphoglucomutase (pgmA) from Aspergillus fumigatus (strain ATCC MYA-4609 / CBS 101355 / FGSC A1100 / Af293) (Neosartorya fumigata).